The following is a 1228-amino-acid chain: Probable phospholipid-transporting ATPase 5 (1228 aa).

Residues 1–74 (MARGRIRSKL…TTRYNLITFF (74 aa)) are Cytoplasmic-facing. A helical membrane pass occupies residues 75–96 (PKSLYEQFHRAANLYFLVAAIL). At 97–100 (SVFP) the chain is on the extracellular side. The helical transmembrane segment at 101-123 (LSPFNKWSMIAPLVFVVGLSMLK) threads the bilayer. Over 124–305 (EALEDWRRFM…SRIERTMDYI (182 aa)) the chain is Cytoplasmic. Residues 306–327 (IYTLLVLLILISCISSSGFAWE) traverse the membrane as a helical segment. Over 328–359 (TEFHMPKMWYLRPGEPIDFTNPINPIYAGVVH) the chain is Extracellular. A helical membrane pass occupies residues 360-377 (LITALLLYGYLIPISLYV). The Cytoplasmic segment spans residues 378–934 (SIEVVKVWQA…HGHWCYKRIA (557 aa)). Residue Asp425 is the 4-aspartylphosphate intermediate of the active site. Lys616 is covalently cross-linked (Glycyl lysine isopeptide (Lys-Gly) (interchain with G-Cter in ubiquitin)). Positions 879 and 883 each coordinate Mg(2+). A helical transmembrane segment spans residues 935 to 954 (QMICYFFYKNIAFGLTLFYF). Over 955 to 968 (EAFTGFSGQSVYND) the chain is Extracellular. The chain crosses the membrane as a helical span at residues 969 to 988 (YYLLLFNVVLTSLPVIALGV). Residues 989-1018 (FEQDVSSEICLQFPALYQQGTKNLFFDWSR) are Cytoplasmic-facing. A helical membrane pass occupies residues 1019-1041 (ILGWMCNGVYASLVIFFLNIGII). Over 1042–1054 (YSQAFRDNGQTAD) the chain is Extracellular. The helical transmembrane segment at 1055-1077 (MDAVGTTMFTCIIWAANVQIALT) threads the bilayer. The Cytoplasmic portion of the chain corresponds to 1078-1083 (MSHFTW). A helical membrane pass occupies residues 1084–1104 (IQHVLIWGSIGMWYLFVAIYS). Residues 1105–1117 (MMPPSYSGNIYRI) lie on the Extracellular side of the membrane. A helical membrane pass occupies residues 1118 to 1146 (LDEILAPAPIYWMATLLVTVAAVLPYVAH). Residues 1147 to 1228 (IAFQRFLNPL…AQDAMSPRSL (82 aa)) lie on the Cytoplasmic side of the membrane.

The protein belongs to the cation transport ATPase (P-type) (TC 3.A.3) family. Type IV subfamily.

Its subcellular location is the membrane. The enzyme catalyses ATP + H2O + phospholipidSide 1 = ADP + phosphate + phospholipidSide 2.. Functionally, involved in transport of phospholipids. The polypeptide is Probable phospholipid-transporting ATPase 5 (Arabidopsis thaliana (Mouse-ear cress)).